Here is a 282-residue protein sequence, read N- to C-terminus: Pantothenate synthetase (282 aa).

32 to 39 is a binding site for ATP; sequence MGALHEGH. Catalysis depends on H39, which acts as the Proton donor. (R)-pantoate is bound at residue Q63. Q63 lines the beta-alanine pocket. 149 to 152 contacts ATP; it reads GEKD. Q155 lines the (R)-pantoate pocket. Residues V178 and 186–189 each bind ATP; that span reads LSSR.

The protein belongs to the pantothenate synthetase family. As to quaternary structure, homodimer.

It localises to the cytoplasm. The catalysed reaction is (R)-pantoate + beta-alanine + ATP = (R)-pantothenate + AMP + diphosphate + H(+). It participates in cofactor biosynthesis; (R)-pantothenate biosynthesis; (R)-pantothenate from (R)-pantoate and beta-alanine: step 1/1. Catalyzes the condensation of pantoate with beta-alanine in an ATP-dependent reaction via a pantoyl-adenylate intermediate. This chain is Pantothenate synthetase, found in Paracoccus denitrificans (strain Pd 1222).